The sequence spans 353 residues: MTIALGKSSKEEKTLFDTVDDWLRRDRFVFVGWSGLLLFPCAYFALGGWFTGTTFVTSWYTHGLASSYLEGCNFLTAAVSTPANSLAHSLLLLWGPEAQGDLTRWCQLGGLWTFVALHGAFGLIGFMLRQFELARSVQLRPYNAIAFSAPIAVFVSVFLIYPLGQSGWFFAPSFGVAAIFRFILFFQGFHNWTLNPFHMMGVAGVLGAALLCAIHGATVENTLFEDGDGANTFRAFNPTQAEETYSMVTANRFWSQIFGVAFSNKRWLHFFMLFVPVTGLWMSAIGVVGLALNLRAYDFVSQEIRAAEDPESETFYTKNILLNEGIRAWMAAQDQPHENLIFPEEVLPRGNAL.

An N-acetylthreonine modification is found at T2. Phosphothreonine is present on T2. Residues 41–61 (CAYFALGGWFTGTTFVTSWYT) traverse the membrane as a helical segment. Residue H118 participates in chlorophyll a binding. Residues 125–141 (GFMLRQFELARSVQLRP) traverse the membrane as a helical segment. Positions 130 and 143 each coordinate pheophytin a. Residues 153–166 (VFVSVFLIYPLGQS) traverse the membrane as a helical segment. H198 serves as a coordination point for chlorophyll a. The chain crosses the membrane as a helical span at residues 208-228 (AALLCAIHGATVENTLFEDGD). A plastoquinone is bound by residues H215 and F262. H215 is a binding site for Fe cation. H269 is a Fe cation binding site. A helical membrane pass occupies residues 279–295 (GLWMSAIGVVGLALNLR).

It belongs to the reaction center PufL/M/PsbA/D family. PSII is composed of 1 copy each of membrane proteins PsbA, PsbB, PsbC, PsbD, PsbE, PsbF, PsbH, PsbI, PsbJ, PsbK, PsbL, PsbM, PsbT, PsbX, PsbY, PsbZ, Psb30/Ycf12, at least 3 peripheral proteins of the oxygen-evolving complex and a large number of cofactors. It forms dimeric complexes. The cofactor is The D1/D2 heterodimer binds P680, chlorophylls that are the primary electron donor of PSII, and subsequent electron acceptors. It shares a non-heme iron and each subunit binds pheophytin, quinone, additional chlorophylls, carotenoids and lipids. There is also a Cl(-1) ion associated with D1 and D2, which is required for oxygen evolution. The PSII complex binds additional chlorophylls, carotenoids and specific lipids..

The protein resides in the plastid. The protein localises to the chloroplast thylakoid membrane. The catalysed reaction is 2 a plastoquinone + 4 hnu + 2 H2O = 2 a plastoquinol + O2. Its function is as follows. Photosystem II (PSII) is a light-driven water:plastoquinone oxidoreductase that uses light energy to abstract electrons from H(2)O, generating O(2) and a proton gradient subsequently used for ATP formation. It consists of a core antenna complex that captures photons, and an electron transfer chain that converts photonic excitation into a charge separation. The D1/D2 (PsbA/PsbD) reaction center heterodimer binds P680, the primary electron donor of PSII as well as several subsequent electron acceptors. D2 is needed for assembly of a stable PSII complex. This Pinus thunbergii (Japanese black pine) protein is Photosystem II D2 protein.